A 300-amino-acid chain; its full sequence is Cell shape-determining protein MreC (300 aa).

The Cytoplasmic portion of the chain corresponds to 1 to 17; that stretch reads MARDRTRPEDFTRPLRR. The helical transmembrane segment at 18-38 threads the bilayer; the sequence is ILVGGLVLLLLGIFLIWRIDS. Topologically, residues 39-300 are periplasmic; that stretch reads PRVEQFRAAL…APAAVEGADG (262 aa). Positions 74–117 form a coiled coil; that stretch reads QSYTRIYEQNQELRRELQQMKAWKEAALQLEQKNARLLDLNQVR. Residues 277-300 are disordered; that stretch reads SDPGKLVAEPPAPPAPAAVEGADG.

The protein belongs to the MreC family.

It localises to the cell inner membrane. In terms of biological role, involved in formation and maintenance of cell shape. This chain is Cell shape-determining protein MreC, found in Cereibacter sphaeroides (Rhodobacter sphaeroides).